Reading from the N-terminus, the 699-residue chain is D-(-)-3-hydroxybutyrate oligomer hydrolase (699 aa).

A signal peptide spans 1–19 (MNPSLCIAVAFACPLSALA). The Charge relay system role is filled by S303.

It belongs to the D-(-)-3-hydroxybutyrate oligomer hydrolase family.

It localises to the secreted. The enzyme catalyses (3R)-hydroxybutanoate dimer + H2O = 2 (R)-3-hydroxybutanoate + H(+). The protein operates within lipid metabolism; butanoate metabolism. Participates in the degradation of poly-3-hydroxybutyrate (PHB). It works downstream of poly(3-hydroxybutyrate) depolymerase, hydrolyzing D(-)-3-hydroxybutyrate oligomers of various length (3HB-oligomers) into 3HB-monomers. The protein is D-(-)-3-hydroxybutyrate oligomer hydrolase of Azoarcus sp. (strain BH72).